A 721-amino-acid chain; its full sequence is Peptide-N(4)-(N-acetyl-beta-glucosaminyl)asparagine amidase (721 aa).

4 residues coordinate Zn(2+): C193, C196, C225, and C228. The active-site Nucleophile is C251. Catalysis depends on residues H278 and D295.

Belongs to the transglutaminase-like superfamily. PNGase family. The cofactor is Zn(2+).

The protein localises to the cytoplasm. The catalysed reaction is Hydrolysis of an N(4)-(acetyl-beta-D-glucosaminyl)asparagine residue in which the glucosamine residue may be further glycosylated, to yield a (substituted) N-acetyl-beta-D-glucosaminylamine and a peptide containing an aspartate residue.. Its function is as follows. Specifically deglycosylates the denatured form of N-linked glycoproteins in the cytoplasm and assists their proteasome-mediated degradation. Cleaves the beta-aspartyl-glucosamine (GlcNAc) of the glycan and the amide side chain of Asn, converting Asn to Asp. Prefers proteins containing high-mannose over those bearing complex type oligosaccharides. Can recognize misfolded proteins in the endoplasmic reticulum that are exported to the cytosol to be destroyed and deglycosylate them, while it has no activity toward native proteins. Deglycosylation is a prerequisite for subsequent proteasome-mediated degradation of some, but not all, misfolded glycoproteins. This chain is Peptide-N(4)-(N-acetyl-beta-glucosaminyl)asparagine amidase (PNG1), found in Arabidopsis thaliana (Mouse-ear cress).